Here is a 390-residue protein sequence, read N- to C-terminus: Acetylornithine aminotransferase (390 aa).

Pyridoxal 5'-phosphate contacts are provided by residues 103–104 (GT) and phenylalanine 129. Arginine 132 provides a ligand contact to N(2)-acetyl-L-ornithine. 214–217 (DEVQ) lines the pyridoxal 5'-phosphate pocket. Lysine 243 carries the N6-(pyridoxal phosphate)lysine modification. N(2)-acetyl-L-ornithine is bound at residue serine 271. Threonine 272 is a pyridoxal 5'-phosphate binding site. An Isoglutamyl lysine isopeptide (Lys-Gln) (interchain with Q-Cter in protein Pup) cross-link involves residue lysine 304.

It belongs to the class-III pyridoxal-phosphate-dependent aminotransferase family. ArgD subfamily. In terms of assembly, homodimer. Pyridoxal 5'-phosphate serves as cofactor.

The protein resides in the cytoplasm. It catalyses the reaction N(2)-acetyl-L-ornithine + 2-oxoglutarate = N-acetyl-L-glutamate 5-semialdehyde + L-glutamate. The protein operates within amino-acid biosynthesis; L-arginine biosynthesis; N(2)-acetyl-L-ornithine from L-glutamate: step 4/4. The chain is Acetylornithine aminotransferase from Mycolicibacterium smegmatis (strain ATCC 700084 / mc(2)155) (Mycobacterium smegmatis).